Reading from the N-terminus, the 299-residue chain is Probable alpha-L-glutamate ligase (299 aa).

The 183-residue stretch at 112-294 folds into the ATP-grasp domain; that stretch reads LQLLTEQGIA…IALQMIVHIE (183 aa). ATP is bound by residues Lys148, 185-186, Asp194, and 218-220; these read DF and RAN. Residues Asp255, Glu267, and Asn269 each contribute to the Mg(2+) site. Mn(2+) is bound by residues Asp255, Glu267, and Asn269.

This sequence belongs to the RimK family. Requires Mg(2+) as cofactor. Mn(2+) serves as cofactor.

This is Probable alpha-L-glutamate ligase from Histophilus somni (strain 129Pt) (Haemophilus somnus).